Reading from the N-terminus, the 109-residue chain is Thioredoxin-like protein slr1139 (109 aa).

Residues 2-107 form the Thioredoxin domain; sequence SLLEITDAEF…LLELLKEELD (106 aa). A disulfide bridge links Cys31 with Cys34.

Belongs to the thioredoxin family.

The protein is Thioredoxin-like protein slr1139 of Synechocystis sp. (strain ATCC 27184 / PCC 6803 / Kazusa).